Reading from the N-terminus, the 221-residue chain is Endo-1,4-beta-xylanase 11A (221 aa).

The first 18 residues, 1–18, serve as a signal peptide directing secretion; that stretch reads MKFATVLAFATAAGAAFA. The region spanning 23-220 is the GH11 domain; sequence SSETTEAGQL…GTGSASMSVS (198 aa). Catalysis depends on glutamate 111, which acts as the Nucleophile. N-linked (GlcNAc...) asparagine glycosylation occurs at asparagine 117. The Proton donor role is filled by glutamate 207.

This sequence belongs to the glycosyl hydrolase 11 (cellulase G) family.

The protein resides in the secreted. It carries out the reaction Endohydrolysis of (1-&gt;4)-beta-D-xylosidic linkages in xylans.. The protein operates within glycan degradation; xylan degradation. Functionally, endo-1,4-beta-xylanase involved in the hydrolysis of xylan, a major structural heterogeneous polysaccharide found in plant biomass representing the second most abundant polysaccharide in the biosphere, after cellulose. The sequence is that of Endo-1,4-beta-xylanase 11A (XYN11A) from Mycosarcoma maydis (Corn smut fungus).